Here is a 66-residue protein sequence, read N- to C-terminus: Phylloseptin-S2 (66 aa).

The signal sequence occupies residues 1–22; the sequence is MAFLKKSLFLVLFLGLVSLSIC. A propeptide spanning residues 23 to 46 is cleaved from the precursor; it reads EEEKRETEEEEHDQEEDDKSEEKR. Residues 25–44 form a disordered region; sequence EKRETEEEEHDQEEDDKSEE. The segment covering 30-41 has biased composition (acidic residues); that stretch reads EEEEHDQEEDDK. Phenylalanine 65 is subject to Phenylalanine amide.

As to expression, expressed by the skin glands.

The protein resides in the secreted. It localises to the target cell membrane. Its function is as follows. Antimicrobial peptide with high activity against Gram-positive bacteria, moderate activity against Gram-negative bacteria, and moderate activity against fungi. Acts by causing bacterial membrane disruption inducing leakage of the intracellular content followed by cell death. It adopts an alpha-helical amphipathic structure in membrane environments. Also shows highly potent antiparasitic activity against Leishmania species. Shows moderate hemolytic activity on human erythrocytes (LC(50)=25 uM). Is also active on human monocytes (IC(50)=22.5 uM). The protein is Phylloseptin-S2 of Phyllomedusa sauvagei (Sauvage's leaf frog).